We begin with the raw amino-acid sequence, 658 residues long: MNEFKLQSDFSLEGDQPKAVDELCESLNGGNSHQTLLGVTGSGKTFTMANVIQRLQRPTLVIAHNKTLAAQLCGEFKEFFPENAVEYFVSYYDYYQPEAYIPQTDTYIEKDASINDEIDKLRHSATSALFERRDVIIVASVSCIYGLGSPEEYREQVLSLRCGMEKDRDEILKGLVDIQYSRNDVNFTRGTFRVRGDVIEVFPASYTETAVRIELFGDEIERITEIDTLTGEILGERNHVAIFPASHFVTRRSKLEKAIESIQEELHEQLEYLKRQGKAVEAKRLEQRTNYDLEMLQEMGFCQGIENYSRHLIGRPAGSRPYCLIDYFPDDYLMVVDESHMTIPQIRGMYAGDMSRKQNLVDHGFRLPSALDNRPLKFQEFEKMINQNIYVSATPGPYEKEHSERIVEQIIRPTGLVDPETEVRPVKGQIDDLYSEINKRTDRNERVLVTTLTKKMAEDLTDYLREMGIRVRYMHSEIDTLERMEIIRDLRLGKFDVLVGINLLREGLDLPEVSLVAILDADKEGYLRDERSLIQTMGRAARNVNGRVIMYGDAITDSMRRAIDETNRRREKQIEFNARHNITPQTVQKKVHDVIEATRSAEDETEAATPENIQEMSAKERKELIAKLQEEMKQAAKELEFEKAAELRDLIMELKTAQ.

In terms of domain architecture, Helicase ATP-binding spans 25 to 182 (ESLNGGNSHQ…KGLVDIQYSR (158 aa)). 38–45 (GVTGSGKT) provides a ligand contact to ATP. Residues 91 to 114 (YYDYYQPEAYIPQTDTYIEKDASI) carry the Beta-hairpin motif. A Helicase C-terminal domain is found at 429-595 (QIDDLYSEIN…TVQKKVHDVI (167 aa)). A UVR domain is found at 622–657 (KELIAKLQEEMKQAAKELEFEKAAELRDLIMELKTA).

It belongs to the UvrB family. In terms of assembly, forms a heterotetramer with UvrA during the search for lesions. Interacts with UvrC in an incision complex.

It is found in the cytoplasm. The UvrABC repair system catalyzes the recognition and processing of DNA lesions. A damage recognition complex composed of 2 UvrA and 2 UvrB subunits scans DNA for abnormalities. Upon binding of the UvrA(2)B(2) complex to a putative damaged site, the DNA wraps around one UvrB monomer. DNA wrap is dependent on ATP binding by UvrB and probably causes local melting of the DNA helix, facilitating insertion of UvrB beta-hairpin between the DNA strands. Then UvrB probes one DNA strand for the presence of a lesion. If a lesion is found the UvrA subunits dissociate and the UvrB-DNA preincision complex is formed. This complex is subsequently bound by UvrC and the second UvrB is released. If no lesion is found, the DNA wraps around the other UvrB subunit that will check the other stand for damage. The polypeptide is UvrABC system protein B (Natranaerobius thermophilus (strain ATCC BAA-1301 / DSM 18059 / JW/NM-WN-LF)).